The following is a 176-amino-acid chain: Skp1-related protein (176 aa).

The protein belongs to the SKP1 family. In terms of assembly, probable component of the SCF(sel-10) E3 ubiquitin-protein ligase complex containing F-box domain-containing protein sel-10 as the substrate recognition component. Interacts with cul-1. May interact with the F-box protein mec-15. Interacts with dre-1. Interacts with syg-1. Interacts with sel-10. As to expression, ubiquitously expressed in the adult.

Its function is as follows. Probable essential component of SCF (SKP1-CUL1-F-box protein) E3 ubiquitin-protein ligase complexes, which mediate the ubiquitination and subsequent proteasomal degradation of target proteins. Regulates cell proliferation during embryonic and larval development. Involved in synapse elimination in early synapse development. May negatively regulate the apoptotic activity of cep-1 in response to genotoxic stress. Plays a role in sex determination. In Caenorhabditis elegans, this protein is Skp1-related protein.